We begin with the raw amino-acid sequence, 114 residues long: Small ribosomal subunit protein uS14m (114 aa).

This sequence belongs to the universal ribosomal protein uS14 family.

Its subcellular location is the mitochondrion. This is Small ribosomal subunit protein uS14m (MRP2) from Eremothecium gossypii (strain ATCC 10895 / CBS 109.51 / FGSC 9923 / NRRL Y-1056) (Yeast).